The sequence spans 158 residues: Succinate dehydrogenase [ubiquinone] cytochrome b small subunit, mitochondrial (158 aa).

Residues 1-55 constitute a mitochondrion transit peptide; the sequence is MALWRLSVLCGAREGRALFLRTPVVRPALVSAFLQDRPAQGWCGTQHIHLSPSHH. At 56–62 the chain is on the mitochondrial matrix side; that stretch reads SGSKAAS. The chain crosses the membrane as a helical span at residues 63-84; it reads LHWTGERVVSVLLLGLIPAAYL. Residues 85–89 are Mitochondrial intermembrane-facing; that stretch reads NPCSA. The helical transmembrane segment at 90 to 110 threads the bilayer; sequence MDYSLAATLTLHSHWGIGQVV. Heme b is bound at residue His101. Over 111–119 the chain is Mitochondrial matrix; that stretch reads TDYVHGDAV. Residue Tyr113 coordinates a ubiquinone. A helical membrane pass occupies residues 120–141; it reads QKAAKTGLLVLSAFTFAGLCYF. Residues 142–158 are Mitochondrial intermembrane-facing; that stretch reads NYHDVGICKAVAMLWKL.

The protein belongs to the CybS family. In terms of assembly, component of complex II composed of four subunits: the flavoprotein (FP) SDHA, iron-sulfur protein (IP) SDHB, and a cytochrome b560 composed of SDHC and SDHD.

It is found in the mitochondrion inner membrane. Its pathway is carbohydrate metabolism; tricarboxylic acid cycle. Its function is as follows. Membrane-anchoring subunit of succinate dehydrogenase (SDH) that is involved in complex II of the mitochondrial electron transport chain and is responsible for transferring electrons from succinate to ubiquinone (coenzyme Q). SDH also oxidizes malate to the non-canonical enol form of oxaloacetate, enol-oxaloacetate. Enol-oxaloacetate, which is a potent inhibitor of the succinate dehydrogenase activity, is further isomerized into keto-oxaloacetate. This chain is Succinate dehydrogenase [ubiquinone] cytochrome b small subunit, mitochondrial (SDHD), found in Bos taurus (Bovine).